Consider the following 940-residue polypeptide: Isoleucine--tRNA ligase (940 aa).

The 'HIGH' region signature appears at 58–68 (PYANGNIHIGH). Glu563 contacts L-isoleucyl-5'-AMP. The 'KMSKS' region motif lies at 604–608 (KMSKS). Lys607 lines the ATP pocket. Residues Cys903, Cys906, Cys923, and Cys926 each contribute to the Zn(2+) site.

It belongs to the class-I aminoacyl-tRNA synthetase family. IleS type 1 subfamily. As to quaternary structure, monomer. Zn(2+) serves as cofactor.

It localises to the cytoplasm. It carries out the reaction tRNA(Ile) + L-isoleucine + ATP = L-isoleucyl-tRNA(Ile) + AMP + diphosphate. Catalyzes the attachment of isoleucine to tRNA(Ile). As IleRS can inadvertently accommodate and process structurally similar amino acids such as valine, to avoid such errors it has two additional distinct tRNA(Ile)-dependent editing activities. One activity is designated as 'pretransfer' editing and involves the hydrolysis of activated Val-AMP. The other activity is designated 'posttransfer' editing and involves deacylation of mischarged Val-tRNA(Ile). The protein is Isoleucine--tRNA ligase of Buchnera aphidicola subsp. Acyrthosiphon pisum (strain APS) (Acyrthosiphon pisum symbiotic bacterium).